The sequence spans 285 residues: Cell division protein DivIB (285 aa).

Over residues Met1–Asp19 the composition is skewed to basic and acidic residues. A disordered region spans residues Met1–Gln20. The Cytoplasmic portion of the chain corresponds to Met1–Ser66. The chain crosses the membrane as a helical span at residues Ile67 to Leu87. Residues Met88 to Asn158 enclose the POTRA domain. Residues Met88 to Tyr285 lie on the Extracellular side of the membrane.

The protein belongs to the FtsQ/DivIB family. DivIB subfamily.

The protein resides in the cell membrane. Functionally, cell division protein that may be involved in stabilizing or promoting the assembly of the division complex. This chain is Cell division protein DivIB, found in Weissella koreensis (strain KACC 15510).